The primary structure comprises 272 residues: uncharacterized protein (272 aa).

4 helical membrane passes run 9 to 29 (PVGF…GSGV), 38 to 58 (LTSF…SFPP), 154 to 174 (AGEF…VLML), and 188 to 208 (AIAL…FNPI). At 209–272 (AAKLEEKTES…KTKKGSVHEA (64 aa)) the chain is on the cytoplasmic side.

It belongs to the MotA family.

The protein localises to the cell membrane. Its function is as follows. May be involved in some transport function. This is an uncharacterized protein from Bacillus subtilis (strain 168).